Reading from the N-terminus, the 244-residue chain is MDPPAVGEAVKRVIVALDPARRGDVDRLLDMARLVCGVGAGIKVGLPMLALGGSEALAEAARLCKGGGLRVLDLKLADIGYIMRLAAESLSRGFDAAIAHAFVGYEGGLVELKKTLDGLGARLVLVVSMSHPGSREVLDPCLDKLLAVARRVEPWGVVAPATRPEVVARVRETLPTTVILSPGVGAQGGKPGDAICLGGADYEIVGRMVAGSPDPVSALRGVAEYIAARCPEKLLHSSTGNGPS.

Substrate contacts are provided by residues aspartate 18, lysine 43, 73–82, serine 130, 182–192, glycine 206, and arginine 207; these read DLKLADIGYI and PGVGAQGGKPG. The Proton donor role is filled by lysine 75.

Belongs to the OMP decarboxylase family. Type 1 subfamily. In terms of assembly, homodimer.

It carries out the reaction orotidine 5'-phosphate + H(+) = UMP + CO2. It participates in pyrimidine metabolism; UMP biosynthesis via de novo pathway; UMP from orotate: step 2/2. Functionally, catalyzes the decarboxylation of orotidine 5'-monophosphate (OMP) to uridine 5'-monophosphate (UMP). This Aeropyrum pernix (strain ATCC 700893 / DSM 11879 / JCM 9820 / NBRC 100138 / K1) protein is Orotidine 5'-phosphate decarboxylase.